A 205-amino-acid chain; its full sequence is ATP phosphoribosyltransferase (205 aa).

The protein belongs to the ATP phosphoribosyltransferase family. Short subfamily. As to quaternary structure, heteromultimer composed of HisG and HisZ subunits.

The protein resides in the cytoplasm. It catalyses the reaction 1-(5-phospho-beta-D-ribosyl)-ATP + diphosphate = 5-phospho-alpha-D-ribose 1-diphosphate + ATP. The protein operates within amino-acid biosynthesis; L-histidine biosynthesis; L-histidine from 5-phospho-alpha-D-ribose 1-diphosphate: step 1/9. Its function is as follows. Catalyzes the condensation of ATP and 5-phosphoribose 1-diphosphate to form N'-(5'-phosphoribosyl)-ATP (PR-ATP). Has a crucial role in the pathway because the rate of histidine biosynthesis seems to be controlled primarily by regulation of HisG enzymatic activity. This Staphylococcus carnosus (strain TM300) protein is ATP phosphoribosyltransferase.